A 380-amino-acid polypeptide reads, in one-letter code: Set1 complex component swd3 (380 aa).

WD repeat units lie at residues 52–91 (GHEK…LECT), 94–133 (GHYR…SVRC), 136–177 (GHTN…RMLP), 179–219 (HSEP…KTLV), 221–262 (PINV…RIFD), 291–330 (NDSS…IIDD), and 335–374 (SDDP…SKHE). Ser379 is modified (phosphoserine).

In terms of assembly, component of the Set1 complex composed of ash2, sdc1, set1, shg1, spp1, swd1, swd2 and swd3.

It is found in the nucleus. In terms of biological role, the Set1 complex specifically methylates 'Lys-4' of histone H3. The chain is Set1 complex component swd3 from Schizosaccharomyces pombe (strain 972 / ATCC 24843) (Fission yeast).